A 2430-amino-acid chain; its full sequence is DNA-directed RNA polymerase subunit beta'' (2430 aa).

Residues cysteine 336, cysteine 455, cysteine 462, and cysteine 465 each contribute to the Zn(2+) site.

The protein belongs to the RNA polymerase beta' chain family. RpoC2 subfamily. In terms of assembly, in plastids the minimal PEP RNA polymerase catalytic core is composed of four subunits: alpha, beta, beta', and beta''. When a (nuclear-encoded) sigma factor is associated with the core the holoenzyme is formed, which can initiate transcription. It depends on Zn(2+) as a cofactor.

It localises to the plastid. It is found in the chloroplast. The enzyme catalyses RNA(n) + a ribonucleoside 5'-triphosphate = RNA(n+1) + diphosphate. DNA-dependent RNA polymerase catalyzes the transcription of DNA into RNA using the four ribonucleoside triphosphates as substrates. This Stigeoclonium helveticum (Green alga) protein is DNA-directed RNA polymerase subunit beta''.